Reading from the N-terminus, the 360-residue chain is Phosphoserine aminotransferase (360 aa).

Arginine 42 serves as a coordination point for L-glutamate. Residues tryptophan 102, threonine 152, aspartate 171, and glutamine 194 each contribute to the pyridoxal 5'-phosphate site. Lysine 195 carries the N6-(pyridoxal phosphate)lysine modification. Position 237–238 (237–238) interacts with pyridoxal 5'-phosphate; it reads NT.

Belongs to the class-V pyridoxal-phosphate-dependent aminotransferase family. SerC subfamily. Homodimer. It depends on pyridoxal 5'-phosphate as a cofactor.

It is found in the cytoplasm. The catalysed reaction is O-phospho-L-serine + 2-oxoglutarate = 3-phosphooxypyruvate + L-glutamate. It carries out the reaction 4-(phosphooxy)-L-threonine + 2-oxoglutarate = (R)-3-hydroxy-2-oxo-4-phosphooxybutanoate + L-glutamate. Its pathway is amino-acid biosynthesis; L-serine biosynthesis; L-serine from 3-phospho-D-glycerate: step 2/3. It participates in cofactor biosynthesis; pyridoxine 5'-phosphate biosynthesis; pyridoxine 5'-phosphate from D-erythrose 4-phosphate: step 3/5. Its function is as follows. Catalyzes the reversible conversion of 3-phosphohydroxypyruvate to phosphoserine and of 3-hydroxy-2-oxo-4-phosphonooxybutanoate to phosphohydroxythreonine. The polypeptide is Phosphoserine aminotransferase (Coxiella burnetii (strain RSA 493 / Nine Mile phase I)).